A 340-amino-acid polypeptide reads, in one-letter code: tRNA N6-adenosine threonylcarbamoyltransferase (340 aa).

Fe cation-binding residues include His-111 and His-115. Residues Val-133–Gly-137, Asp-166, Gly-179, Asp-183, and Asn-272 each bind substrate. Asp-300 provides a ligand contact to Fe cation.

This sequence belongs to the KAE1 / TsaD family. It depends on Fe(2+) as a cofactor.

It localises to the cytoplasm. It carries out the reaction L-threonylcarbamoyladenylate + adenosine(37) in tRNA = N(6)-L-threonylcarbamoyladenosine(37) in tRNA + AMP + H(+). In terms of biological role, required for the formation of a threonylcarbamoyl group on adenosine at position 37 (t(6)A37) in tRNAs that read codons beginning with adenine. Is involved in the transfer of the threonylcarbamoyl moiety of threonylcarbamoyl-AMP (TC-AMP) to the N6 group of A37, together with TsaE and TsaB. TsaD likely plays a direct catalytic role in this reaction. This Geobacter sulfurreducens (strain ATCC 51573 / DSM 12127 / PCA) protein is tRNA N6-adenosine threonylcarbamoyltransferase.